The primary structure comprises 462 residues: Ketoisovalerate reductase (462 aa).

The segment at 34-55 (PTAVKPDRADRGDFDPGKYPVD) is disordered. The span at 38–49 (KPDRADRGDFDP) shows a compositional bias: basic and acidic residues. 72-77 (GPGNVG) contacts NADP(+). Residues 167-184 (ADRLRRYLGRCSSVVFAQ) carry the Calmoduling-binding motif. K290 functions as the Proton donor in the catalytic mechanism. Positions 294, 298, and 403 each coordinate substrate. NADP(+) is bound at residue E415.

Belongs to the ketopantoate reductase family. Homodimer. Binds to calmodulin in a calcium-independent manner.

The catalysed reaction is (R)-2-hydroxy-3-methylbutanoate + NADP(+) = 3-methyl-2-oxobutanoate + NADPH + H(+). Its activity is regulated as follows. Environmental stimuli such as light and salt stress suppress activity through stimulation of calmodulin (CaM) that binds BEA2 and probably impairs its dimerization. Its function is as follows. Ketoisovalerate reductase; part of the gene cluster that mediates the biosynthesis of beauvericin (BEA), a non-ribosomal cyclic hexadepsipeptide that shows antibiotic, antifungal, insecticidal, and cancer cell antiproliferative and antihaptotactic activity. Ketoisovalerate reductase BEA2 catalyzes the NADPH-specific reduction of ketoisovaleric acid to hydroxyisovalerate, a precursor for beauvericin biosynthesis. The nonribosomal cyclodepsipeptide synthetase BEA1 then catalyzes the formation of beauvericin via condensation and cyclization of 3 dipeptidol monomers, each composed of one unit of hydroxyisovalerate and one unit of N-methyl-phenylalanine. The polypeptide is Ketoisovalerate reductase (Beauveria bassiana (White muscardine disease fungus)).